A 125-amino-acid polypeptide reads, in one-letter code: Small ribosomal subunit protein uS13 (125 aa).

The tract at residues 90–125 (QRHRKGLPVRGQRTKTNARTRKGPKRTVAGKKKATK) is disordered.

This sequence belongs to the universal ribosomal protein uS13 family. As to quaternary structure, part of the 30S ribosomal subunit. Forms a loose heterodimer with protein S19. Forms two bridges to the 50S subunit in the 70S ribosome.

Its function is as follows. Located at the top of the head of the 30S subunit, it contacts several helices of the 16S rRNA. In the 70S ribosome it contacts the 23S rRNA (bridge B1a) and protein L5 of the 50S subunit (bridge B1b), connecting the 2 subunits; these bridges are implicated in subunit movement. Contacts the tRNAs in the A and P-sites. This Bifidobacterium longum (strain DJO10A) protein is Small ribosomal subunit protein uS13.